The chain runs to 334 residues: Phospho-N-acetylmuramoyl-pentapeptide-transferase (334 aa).

A run of 9 helical transmembrane segments spans residues 5–25 (VVWL…PVTI), 52–72 (PTMG…VLLV), 81–101 (GLVV…DDFI), 116–136 (KILG…FKLG), 148–168 (GISF…VLLG), 181–200 (GLAS…LALV), 230–250 (VFMG…GAVV), 256–276 (LLVV…IQVI), and 309–329 (FWLL…DFWL).

It belongs to the glycosyltransferase 4 family. MraY subfamily. It depends on Mg(2+) as a cofactor.

The protein resides in the cell membrane. It catalyses the reaction UDP-N-acetyl-alpha-D-muramoyl-L-alanyl-gamma-D-glutamyl-meso-2,6-diaminopimeloyl-D-alanyl-D-alanine + di-trans,octa-cis-undecaprenyl phosphate = di-trans,octa-cis-undecaprenyl diphospho-N-acetyl-alpha-D-muramoyl-L-alanyl-D-glutamyl-meso-2,6-diaminopimeloyl-D-alanyl-D-alanine + UMP. The protein operates within cell wall biogenesis; peptidoglycan biosynthesis. In terms of biological role, catalyzes the initial step of the lipid cycle reactions in the biosynthesis of the cell wall peptidoglycan: transfers peptidoglycan precursor phospho-MurNAc-pentapeptide from UDP-MurNAc-pentapeptide onto the lipid carrier undecaprenyl phosphate, yielding undecaprenyl-pyrophosphoryl-MurNAc-pentapeptide, known as lipid I. The chain is Phospho-N-acetylmuramoyl-pentapeptide-transferase from Desulforamulus reducens (strain ATCC BAA-1160 / DSM 100696 / MI-1) (Desulfotomaculum reducens).